Consider the following 329-residue polypeptide: Ubiquitin carboxyl-terminal hydrolase isozyme L5 (329 aa).

A UCH catalytic domain is found at 7-225 (EWCLMESDPG…IRFNLMAIVS (219 aa)). Lys47 carries the post-translational modification N6-succinyllysine. The Nucleophile role is filled by Cys88. Lys158 bears the N6-acetyllysine mark. His164 acts as the Proton donor in catalysis. Residue Lys289 is modified to N6-succinyllysine. The ULD domain maps to 291–319 (NYLPFIMELLKTLAEHQQLIPLVEKAKEK). Positions 313-329 (VEKAKEKQNAKKAQETK) are interaction with ADRM1.

The protein belongs to the peptidase C12 family. As to quaternary structure, component of the 19S (PA700) regulatory complex of the 26S proteasome. Interacts with ADRM1 and NFRKB; in vitro ADRM1 and NFRKB compete for interaction with UCHL5. Component of the INO80 complex; specifically part of a complex module associated with N-terminus of INO80.

Its subcellular location is the cytoplasm. It localises to the nucleus. It catalyses the reaction Thiol-dependent hydrolysis of ester, thioester, amide, peptide and isopeptide bonds formed by the C-terminal Gly of ubiquitin (a 76-residue protein attached to proteins as an intracellular targeting signal).. With respect to regulation, activated by ADRM1. Inhibited by interaction with NFRKB. Protease that specifically cleaves 'Lys-48'-linked polyubiquitin chains. Deubiquitinating enzyme associated with the 19S regulatory subunit of the 26S proteasome. Putative regulatory component of the INO80 complex; however is inactive in the INO80 complex and is activated by a transient interaction of the INO80 complex with the proteasome via ADRM1. This is Ubiquitin carboxyl-terminal hydrolase isozyme L5 (UCHL5) from Homo sapiens (Human).